Here is a 187-residue protein sequence, read N- to C-terminus: Alpha-D-galactose-binding lectin (187 aa).

Residues 1 to 37 (MTFAKQSCFNSIILLSIATSYFKIGHKISELGNRIEK) form the signal peptide. At Thr-39 the chain carries N-acetylthreonine. N-acetyl-alpha-D-galactosamine-binding positions include 53–56 (HPKG), Asp-64, 72–76 (DIHER), His-101, Gly-104, Glu-112, 120–122 (DRH), His-145, Gly-148, Glu-156, and 164–166 (DKH).

As to quaternary structure, homodimer. In terms of tissue distribution, highest expression in the posterior part of the mantle. Highly expressed in gills and to a lesser extent in mid mantle and anterior muscle. Lowest expression in digestive gland and posterior adductor muscle. Scarcely detectable in hemocytes.

Agglutination of E.coli is inhibited by alpha-galactoside melibiose, but not by beta-galactoside lactose. In terms of biological role, alpha-D-galactose-binding lectin. Binds D-GalNAc, but not glucose or its derivatives. Has hemagglutinating activity towards rabbit erythrocytes. Agglutinates bacteria. Has bacteriostatic activity on both Gram-positive and Gram-negative bacteria including B.subtilis, S.aureus, E.coli and V.parahaemolyticus, respectively. Has a dose-dependent cytotoxic effect on the human globotriaosylceramide (Gb3)-expressing Epstein-Barr virus (EBV)-positive Burkitt's lymphoma (Raji) cell line. Has dose-dependent cytotoxic effect on another Burkitt's lymphoma (Ramos) cell line, which does not possess the EBV genome, but also expresses Gb3. Binds to Gb3 in these cells leading to phosphorylation of MEK1/2, ERK1/2, JNK and p38 kinase, activation of caspase-9/3 and to expression of p21 and tumor necrosis factor (TNF)-alpha. No cytotoxic effect on the human chronic myelogenous leukemia (K-562) cell line, which does not express Gb3. May be involved in innate immunity acting as an antibacterial or antifungal agent. May be a pattern recognition receptor (PRR) involved in recognition of glycans found on parasitic or symbiotic microorganisms. The protein is Alpha-D-galactose-binding lectin of Mytilus galloprovincialis (Mediterranean mussel).